The primary structure comprises 239 residues: Ribosomal RNA small subunit methyltransferase G (239 aa).

Residues G78, F83, 129–130 (AE), and R148 each bind S-adenosyl-L-methionine.

Belongs to the methyltransferase superfamily. RNA methyltransferase RsmG family.

Its subcellular location is the cytoplasm. Its function is as follows. Specifically methylates the N7 position of a guanine in 16S rRNA. This chain is Ribosomal RNA small subunit methyltransferase G, found in Clostridium tetani (strain Massachusetts / E88).